The chain runs to 195 residues: MPEEGRPCPWVRWSGTAFQRQWPWLLLVVFITVFCCWFHCSGLLSKQQQRLLEHPEPHTAELQLNLTVPRKDPTLRWGAGPALGRSFTHGPELEEGHLRIHQDGLYRLHIQVTLANCSSPGSTLQHRATLAVGICSPAAHGISLLRGRFGQDCTVALQRLTYLVHGDVLCTNLTLPLLPSRNADETFFGVQWICP.

The Cytoplasmic segment spans residues 1–23 (MPEEGRPCPWVRWSGTAFQRQWP). A helical; Signal-anchor for type II membrane protein transmembrane segment spans residues 24 to 44 (WLLLVVFITVFCCWFHCSGLL). At 45-195 (SKQQQRLLEH…TFFGVQWICP (151 aa)) the chain is on the extracellular side. Residues 58 to 193 (HTAELQLNLT…DETFFGVQWI (136 aa)) form the THD domain. 2 N-linked (GlcNAc...) asparagine glycosylation sites follow: asparagine 65 and asparagine 116. Disulfide bonds link cysteine 117/cysteine 153 and cysteine 135/cysteine 170. An N-linked (GlcNAc...) asparagine glycan is attached at asparagine 172.

It belongs to the tumor necrosis factor family. In terms of assembly, homotrimer. Post-translationally, N-glycosylated. Very low level of expression. Detected in splenocytes and thymocytes.

The protein resides in the cell membrane. Its function is as follows. Expressed at the plasma membrane of B cells, it is the ligand of the CD27 receptor which is specifically expressed at the surface of T cells. The CD70-CD27 signaling pathway mediates antigen-specific T cell activation and expansion which in turn provides immune surveillance of B cells. The protein is CD70 antigen of Mus musculus (Mouse).